A 247-amino-acid polypeptide reads, in one-letter code: tRNA pseudouridine synthase A (247 aa).

Catalysis depends on aspartate 52, which acts as the Nucleophile. Substrate is bound at residue tyrosine 111.

Belongs to the tRNA pseudouridine synthase TruA family. In terms of assembly, homodimer.

It catalyses the reaction uridine(38/39/40) in tRNA = pseudouridine(38/39/40) in tRNA. Functionally, formation of pseudouridine at positions 38, 39 and 40 in the anticodon stem and loop of transfer RNAs. This chain is tRNA pseudouridine synthase A, found in Caulobacter vibrioides (strain ATCC 19089 / CIP 103742 / CB 15) (Caulobacter crescentus).